We begin with the raw amino-acid sequence, 311 residues long: DNA repair and recombination protein RadA (311 aa).

An ATP-binding site is contributed by 104–111 (GEFGSGKS).

It belongs to the eukaryotic RecA-like protein family.

Functionally, involved in DNA repair and in homologous recombination. Binds and assemble on single-stranded DNA to form a nucleoprotein filament. Hydrolyzes ATP in a ssDNA-dependent manner and promotes DNA strand exchange between homologous DNA molecules. The protein is DNA repair and recombination protein RadA of Methanosphaera stadtmanae (strain ATCC 43021 / DSM 3091 / JCM 11832 / MCB-3).